A 138-amino-acid chain; its full sequence is Cysteine desulfuration protein SufE (138 aa).

Cys51 functions as the Cysteine persulfide intermediate in the catalytic mechanism.

This sequence belongs to the SufE family. Homodimer. Interacts with SufS.

It localises to the cytoplasm. The protein operates within cofactor biosynthesis; iron-sulfur cluster biosynthesis. Its function is as follows. Participates in cysteine desulfuration mediated by SufS. Cysteine desulfuration mobilizes sulfur from L-cysteine to yield L-alanine and constitutes an essential step in sulfur metabolism for biosynthesis of a variety of sulfur-containing biomolecules. Functions as a sulfur acceptor for SufS, by mediating the direct transfer of the sulfur atom from the S-sulfanylcysteine of SufS, an intermediate product of cysteine desulfuration process. The sequence is that of Cysteine desulfuration protein SufE from Escherichia coli (strain K12 / MC4100 / BW2952).